The sequence spans 308 residues: Coenzyme PQQ synthesis protein B (308 aa).

It belongs to the PqqB family.

It functions in the pathway cofactor biosynthesis; pyrroloquinoline quinone biosynthesis. Its function is as follows. May be involved in the transport of PQQ or its precursor to the periplasm. The chain is Coenzyme PQQ synthesis protein B from Rhodopseudomonas palustris (strain BisB5).